A 228-amino-acid polypeptide reads, in one-letter code: Cytidylate kinase (228 aa).

17 to 25 is a binding site for ATP; it reads GPSASGKGT.

It belongs to the cytidylate kinase family. Type 1 subfamily.

The protein resides in the cytoplasm. It catalyses the reaction CMP + ATP = CDP + ADP. The catalysed reaction is dCMP + ATP = dCDP + ADP. The sequence is that of Cytidylate kinase from Paraburkholderia phytofirmans (strain DSM 17436 / LMG 22146 / PsJN) (Burkholderia phytofirmans).